Consider the following 687-residue polypeptide: Ribosomal RNA processing protein 1 homolog (687 aa).

The segment covering 288 to 298 has biased composition (acidic residues); sequence DEEDDEVNAEE. Disordered stretches follow at residues 288 to 312 and 463 to 624; these read DEED…RAGN and VKEA…GSGK. Basic and acidic residues-rich tracts occupy residues 463–488, 497–520, and 527–543; these read VKEA…DQTK, PKND…EEPA, and HSKT…DEQP. Residues 554–564 are compositionally biased toward low complexity; that stretch reads KAKPTPKTKAA. Residues 596-608 are compositionally biased toward polar residues; it reads KQANSKLPQSTPK. 2 positions are modified to phosphothreonine: T617 and T620. Phosphoserine is present on S622.

Belongs to the RRP1 family.

It is found in the nucleus. Its function is as follows. May be involved in the generation of 28S rRNA. This is Ribosomal RNA processing protein 1 homolog (Nnp-1) from Drosophila melanogaster (Fruit fly).